A 421-amino-acid chain; its full sequence is CinA-like protein (421 aa).

This sequence belongs to the CinA family.

The polypeptide is CinA-like protein (Mycobacterium sp. (strain JLS)).